The sequence spans 64 residues: Large ribosomal subunit protein bL28c (64 aa).

Belongs to the bacterial ribosomal protein bL28 family.

The protein resides in the plastid. It is found in the chloroplast. In Gracilaria tenuistipitata var. liui (Red alga), this protein is Large ribosomal subunit protein bL28c.